The following is a 443-amino-acid chain: Protein FAM83A (443 aa).

The segment at 311–403 is disordered; that stretch reads DSGVSVMTDS…YYQRNYAPDS (93 aa). The segment covering 315-326 has biased composition (polar residues); the sequence is SVMTDSTPESVN. Low complexity-rich tracts occupy residues 327–344 and 388–399; these read TTSE…SNDS and SNYQPNYYQRNY.

Belongs to the FAM83 family.

The protein resides in the cytoplasm. Its function is as follows. May function in the epidermal growth factor receptor/EGFR signaling pathway. The sequence is that of Protein FAM83A from Xenopus laevis (African clawed frog).